The sequence spans 319 residues: Pantothenate kinase (319 aa).

Residue glycine 101 to serine 108 participates in ATP binding.

This sequence belongs to the prokaryotic pantothenate kinase family.

Its subcellular location is the cytoplasm. It catalyses the reaction (R)-pantothenate + ATP = (R)-4'-phosphopantothenate + ADP + H(+). The protein operates within cofactor biosynthesis; coenzyme A biosynthesis; CoA from (R)-pantothenate: step 1/5. This is Pantothenate kinase from Clavibacter sepedonicus (Clavibacter michiganensis subsp. sepedonicus).